Reading from the N-terminus, the 1175-residue chain is Potassium/sodium hyperpolarization-activated cyclic nucleotide-gated channel 4 (1175 aa).

Topologically, residues 1–259 are cytoplasmic; it reads MDKLPPSMRK…SAGFWIIHPY (259 aa). Residues 17-186 form a disordered region; the sequence is QQVGAKAWIM…SSCGEQRPAD (170 aa). The span at 26 to 36 shows a compositional bias: acidic residues; the sequence is MDEEEDAEEEG. The segment covering 60 to 75 has biased composition (low complexity); the sequence is PSAAAAAAGGAESRGA. Residues 111 to 126 are compositionally biased toward gly residues; sequence SRGGGGGGGSTGGGSH. The span at 128–140 shows a compositional bias: basic and acidic residues; sequence HLHDSAEERRLIA. Ser-145 is modified (phosphoserine). Over residues 162–175 the composition is skewed to pro residues; that stretch reads PGAPAPPAASPPQV. The helical transmembrane segment at 260 to 288 threads the bilayer; that stretch reads SDFRFYWDLTMLLLMVGNLIIIPVGITFF. Residues 289 to 292 lie on the Extracellular side of the membrane; sequence KDEN. Residues 293–316 traverse the membrane as a helical segment; sequence TTPWIVFNVVSDTFFLIDLVLNFR. Topologically, residues 317–329 are cytoplasmic; the sequence is TGIVVEDNTDIIL. The helical transmembrane segment at 330-352 threads the bilayer; it reads DPRRIKMKYLKSWFVVDFVSSIP. Topologically, residues 353 to 374 are extracellular; the sequence is VDYIFLIVETRIDSEVYKTARA. Residues 375–410 form a helical; Voltage-sensor membrane-spanning segment; it reads LRIVRFTKILSLLRLLRLSRLIRYIHQWEEIFHMTY. Over 411–413 the chain is Cytoplasmic; it reads DLA. Residues 414-444 form a helical membrane-spanning segment; it reads SAVVRIVNLIGMMLLLCHWDGCLQFLVPMLQ. At 445-449 the chain is on the extracellular side; sequence DFPDD. The segment at residues 450-478 is an intramembrane region (pore-forming); the sequence is CWVSLNNMVNNSWGKQYSYALFKAMSHML. Residues 479–488 are Extracellular-facing; sequence CIGYGRQAPM. A helical transmembrane segment spans residues 489-521; the sequence is GMSDVWLTMLSMIVGATCYAMFIGHATALIQSL. At 522-1175 the chain is on the cytoplasmic side; the sequence is DSSRRQYQEK…PVRSKLPSNL (654 aa). Tyr-560, Lys-563, Phe-565, and Glu-567 together coordinate 3',5'-cyclic GMP. 3',5'-cyclic AMP contacts are provided by Gly-660, Glu-661, Cys-663, Arg-670, Thr-671, Val-674, and Arg-711. Disordered regions lie at residues 801-820 and 830-1175; these read AIFR…AGQT and LAPS…PSNL. 4 stretches are compositionally biased toward low complexity: residues 839–854, 900–912, 948–966, and 984–1004; these read SPAS…SSAS, LGGS…SPLL, SPTS…LSPG, and RLPF…SPRG. Pro residues predominate over residues 1038 to 1050; that stretch reads ASSPPPPPPPPAP. Phosphoserine is present on residues Ser-1089 and Ser-1093. The span at 1102–1114 shows a compositional bias: pro residues; it reads PPFPRAPGRPPGA.

The protein belongs to the potassium channel HCN family. Homotetramer. The channel is composed of a homo- or heterotetrameric complex of pore-forming subunits. Interacts with PEX5L with a 4:4 HCN4:PEX5L stoichiometry; reduces the effects of cAMP on the voltage-dependence and rate of activation. Interacts with IRAG1; regulates HCN4 channel activity. Interacts with IRAG2; regulates HCN4 channel activity. Post-translationally, S-palmitoylated. Highly expressed in the heart sinoatrial node (SAN). Not detected in atrium, ventricle, forebrain or cerebellum. Detected at very low levels in total brain.

The protein resides in the cell membrane. The enzyme catalyses K(+)(in) = K(+)(out). It catalyses the reaction Na(+)(in) = Na(+)(out). Activated by cAMP and to a lesser extent by cGMP and cCMP. cAMP binding causes a conformation change that leads to the assembly of an active tetramer and channel opening by shifting the voltage-dependency towards more positive voltages. Binding of cAMP removes a tonic inhibition conferred by cyclic nucleotide-binding domain (CNBD) on channel opening. Cyclic dinucleotides can modulate HCN4 channel; cyclic dinucleotides acting as potent antagonists of cAMP. Inhibited by extracellular Cs(+) ions. Auxiliary subunits can also regulate HCN4 channel. IRAG1 causes a gain-of-function by shifting HCN4 activation to more depolarized membrane potentials in the absence of cAMP. In contrast, IRAG2 causes a loss-of-function by inhibiting cAMP-dependent potentiation of HCN4 activation. Functionally, hyperpolarization-activated ion channel that are permeable to Na(+) and K(+) ions with very slow activation and inactivation. Exhibits higher selectivity for K(+) over Na(+) ions. Contributes to the native pacemaker currents in heart (If) that regulate the rhythm of heart beat. Contributes to the native pacemaker currents in neurons (Ih). May mediate responses to sour stimuli. This Oryctolagus cuniculus (Rabbit) protein is Potassium/sodium hyperpolarization-activated cyclic nucleotide-gated channel 4 (HCN4).